A 121-amino-acid chain; its full sequence is Ribonuclease P protein component (121 aa).

Belongs to the RnpA family. As to quaternary structure, consists of a catalytic RNA component (M1 or rnpB) and a protein subunit.

It catalyses the reaction Endonucleolytic cleavage of RNA, removing 5'-extranucleotides from tRNA precursor.. Its function is as follows. RNaseP catalyzes the removal of the 5'-leader sequence from pre-tRNA to produce the mature 5'-terminus. It can also cleave other RNA substrates such as 4.5S RNA. The protein component plays an auxiliary but essential role in vivo by binding to the 5'-leader sequence and broadening the substrate specificity of the ribozyme. The protein is Ribonuclease P protein component of Desulfosudis oleivorans (strain DSM 6200 / JCM 39069 / Hxd3) (Desulfococcus oleovorans).